A 427-amino-acid polypeptide reads, in one-letter code: Glutamate-1-semialdehyde 2,1-aminomutase (427 aa).

An N6-(pyridoxal phosphate)lysine modification is found at K267.

The protein belongs to the class-III pyridoxal-phosphate-dependent aminotransferase family. HemL subfamily. As to quaternary structure, homodimer. The cofactor is pyridoxal 5'-phosphate.

It localises to the cytoplasm. The catalysed reaction is (S)-4-amino-5-oxopentanoate = 5-aminolevulinate. It functions in the pathway porphyrin-containing compound metabolism; protoporphyrin-IX biosynthesis; 5-aminolevulinate from L-glutamyl-tRNA(Glu): step 2/2. This Syntrophotalea carbinolica (strain DSM 2380 / NBRC 103641 / GraBd1) (Pelobacter carbinolicus) protein is Glutamate-1-semialdehyde 2,1-aminomutase.